A 430-amino-acid polypeptide reads, in one-letter code: Adenylosuccinate synthetase (430 aa).

Residues Gly-17–Lys-23 and Gly-45–Thr-47 each bind GTP. The Proton acceptor role is filled by Asp-18. The Mg(2+) site is built by Asp-18 and Gly-45. Residues Asp-18–Lys-21, Asn-43–His-46, Thr-139, Arg-153, Asn-229, Thr-244, and Arg-308 contribute to the IMP site. The active-site Proton donor is the His-46. Position 304–310 (Thr-304–Arg-310) interacts with substrate. Residues Arg-310, Lys-336 to Asp-338, and Gly-418 to Gly-420 contribute to the GTP site.

The protein belongs to the adenylosuccinate synthetase family. Homodimer. Mg(2+) is required as a cofactor.

It localises to the cytoplasm. It catalyses the reaction IMP + L-aspartate + GTP = N(6)-(1,2-dicarboxyethyl)-AMP + GDP + phosphate + 2 H(+). It functions in the pathway purine metabolism; AMP biosynthesis via de novo pathway; AMP from IMP: step 1/2. Functionally, plays an important role in the de novo pathway and in the salvage pathway of purine nucleotide biosynthesis. Catalyzes the first committed step in the biosynthesis of AMP from IMP. The chain is Adenylosuccinate synthetase from Cryptococcus neoformans var. neoformans serotype D (strain JEC21 / ATCC MYA-565) (Filobasidiella neoformans).